Consider the following 342-residue polypeptide: Probable dual-specificity RNA methyltransferase RlmN (342 aa).

Glutamate 91 functions as the Proton acceptor in the catalytic mechanism. The 230-residue stretch at tyrosine 97–aspartate 326 folds into the Radical SAM core domain. Cysteines 104 and 331 form a disulfide. The [4Fe-4S] cluster site is built by cysteine 111, cysteine 115, and cysteine 118. S-adenosyl-L-methionine is bound by residues glycine 157 to glutamate 158, serine 189, serine 212 to histidine 214, and asparagine 288. Cysteine 331 functions as the S-methylcysteine intermediate in the catalytic mechanism.

It belongs to the radical SAM superfamily. RlmN family. Requires [4Fe-4S] cluster as cofactor.

The protein localises to the cytoplasm. The enzyme catalyses adenosine(2503) in 23S rRNA + 2 reduced [2Fe-2S]-[ferredoxin] + 2 S-adenosyl-L-methionine = 2-methyladenosine(2503) in 23S rRNA + 5'-deoxyadenosine + L-methionine + 2 oxidized [2Fe-2S]-[ferredoxin] + S-adenosyl-L-homocysteine. It catalyses the reaction adenosine(37) in tRNA + 2 reduced [2Fe-2S]-[ferredoxin] + 2 S-adenosyl-L-methionine = 2-methyladenosine(37) in tRNA + 5'-deoxyadenosine + L-methionine + 2 oxidized [2Fe-2S]-[ferredoxin] + S-adenosyl-L-homocysteine. Functionally, specifically methylates position 2 of adenine 2503 in 23S rRNA and position 2 of adenine 37 in tRNAs. This chain is Probable dual-specificity RNA methyltransferase RlmN, found in Thermoanaerobacter pseudethanolicus (strain ATCC 33223 / 39E) (Clostridium thermohydrosulfuricum).